The chain runs to 281 residues: Histidine biosynthesis bifunctional protein hisIE, chloroplastic (281 aa).

Residues 1–50 (MAVSYNALAQSLARSSCFIPKPYSFRDTKLRSRSNVVFACNDNKNIALQA) constitute a chloroplast transit peptide. The segment at 51–178 (KVDNLLDRIK…NKLALTTLYS (128 aa)) is phosphoribosyl-AMP cyclohydrolase. The phosphoribosyl-ATP pyrophosphohydrolase stretch occupies residues 179–281 (LESIISKRKE…GIEEKQNRTK (103 aa)).

In the N-terminal section; belongs to the PRA-CH family. The protein in the C-terminal section; belongs to the PRA-PH family. As to expression, ubiquitously expressed throughout development.

The protein localises to the plastid. It localises to the chloroplast. The catalysed reaction is 1-(5-phospho-beta-D-ribosyl)-ATP + H2O = 1-(5-phospho-beta-D-ribosyl)-5'-AMP + diphosphate + H(+). It catalyses the reaction 1-(5-phospho-beta-D-ribosyl)-5'-AMP + H2O = 1-(5-phospho-beta-D-ribosyl)-5-[(5-phospho-beta-D-ribosylamino)methylideneamino]imidazole-4-carboxamide. The protein operates within amino-acid biosynthesis; L-histidine biosynthesis; L-histidine from 5-phospho-alpha-D-ribose 1-diphosphate: step 2/9. It functions in the pathway amino-acid biosynthesis; L-histidine biosynthesis; L-histidine from 5-phospho-alpha-D-ribose 1-diphosphate: step 3/9. The polypeptide is Histidine biosynthesis bifunctional protein hisIE, chloroplastic (HISN2) (Arabidopsis thaliana (Mouse-ear cress)).